Here is a 214-residue protein sequence, read N- to C-terminus: ATP-dependent Clp protease proteolytic subunit 3 (214 aa).

Catalysis depends on Ser106, which acts as the Nucleophile. His131 is an active-site residue.

The protein belongs to the peptidase S14 family. As to quaternary structure, fourteen ClpP subunits assemble into 2 heptameric rings which stack back to back to give a disk-like structure with a central cavity, resembling the structure of eukaryotic proteasomes.

It is found in the cytoplasm. The enzyme catalyses Hydrolysis of proteins to small peptides in the presence of ATP and magnesium. alpha-casein is the usual test substrate. In the absence of ATP, only oligopeptides shorter than five residues are hydrolyzed (such as succinyl-Leu-Tyr-|-NHMec, and Leu-Tyr-Leu-|-Tyr-Trp, in which cleavage of the -Tyr-|-Leu- and -Tyr-|-Trp bonds also occurs).. Functionally, cleaves peptides in various proteins in a process that requires ATP hydrolysis. Has a chymotrypsin-like activity. Plays a major role in the degradation of misfolded proteins. The chain is ATP-dependent Clp protease proteolytic subunit 3 from Trichormus variabilis (strain ATCC 29413 / PCC 7937) (Anabaena variabilis).